A 179-amino-acid chain; its full sequence is Cytochrome b6-f complex iron-sulfur subunit 1 (179 aa).

A helical transmembrane segment spans residues 21–43 (LLTFGTVTGVALGALYPVVNYFI). Positions 61–162 (GNDVSVSKFL…AKTENDKIVL (102 aa)) constitute a Rieske domain. [2Fe-2S] cluster-binding residues include C108, H110, C126, and H129. An intrachain disulfide couples C113 to C128.

This sequence belongs to the Rieske iron-sulfur protein family. In terms of assembly, the 4 large subunits of the cytochrome b6-f complex are cytochrome b6, subunit IV (17 kDa polypeptide, PetD), cytochrome f and the Rieske protein, while the 4 small subunits are PetG, PetL, PetM and PetN. The complex functions as a dimer. The cofactor is [2Fe-2S] cluster.

It is found in the cellular thylakoid membrane. The enzyme catalyses 2 oxidized [plastocyanin] + a plastoquinol + 2 H(+)(in) = 2 reduced [plastocyanin] + a plastoquinone + 4 H(+)(out). Its function is as follows. Component of the cytochrome b6-f complex, which mediates electron transfer between photosystem II (PSII) and photosystem I (PSI), cyclic electron flow around PSI, and state transitions. This is Cytochrome b6-f complex iron-sulfur subunit 1 from Trichormus variabilis (strain ATCC 29413 / PCC 7937) (Anabaena variabilis).